A 518-amino-acid chain; its full sequence is Protein nucleotidyltransferase YdiU (518 aa).

A disordered region spans residues Met1–Pro22. ATP contacts are provided by Gly100, Gly102, Arg103, Lys123, Asp135, Gly136, Arg193, and Arg200. The active-site Proton acceptor is the Asp270. 2 residues coordinate Mg(2+): Asn271 and Asp280. ATP is bound at residue Asp280.

Belongs to the SELO family. Mg(2+) is required as a cofactor. Requires Mn(2+) as cofactor.

It catalyses the reaction L-seryl-[protein] + ATP = 3-O-(5'-adenylyl)-L-seryl-[protein] + diphosphate. The catalysed reaction is L-threonyl-[protein] + ATP = 3-O-(5'-adenylyl)-L-threonyl-[protein] + diphosphate. It carries out the reaction L-tyrosyl-[protein] + ATP = O-(5'-adenylyl)-L-tyrosyl-[protein] + diphosphate. The enzyme catalyses L-histidyl-[protein] + UTP = N(tele)-(5'-uridylyl)-L-histidyl-[protein] + diphosphate. It catalyses the reaction L-seryl-[protein] + UTP = O-(5'-uridylyl)-L-seryl-[protein] + diphosphate. The catalysed reaction is L-tyrosyl-[protein] + UTP = O-(5'-uridylyl)-L-tyrosyl-[protein] + diphosphate. In terms of biological role, nucleotidyltransferase involved in the post-translational modification of proteins. It can catalyze the addition of adenosine monophosphate (AMP) or uridine monophosphate (UMP) to a protein, resulting in modifications known as AMPylation and UMPylation. The chain is Protein nucleotidyltransferase YdiU from Xanthomonas campestris pv. campestris (strain 8004).